The following is a 308-amino-acid chain: MDMLHTILNFLLPPLTISFLVLFYPFYLFTKLMSCLKHLHFENVTGKVVLITGASSGIGEHVAYEYAKKGAKLALVARRKDRLEIVAETSRQLGSGDVIIIPGDVSNVEDCKKFIDETIHHFGKLDHLINNAGVPQTVIFEDFTQIQDANSIMDINFWGSTYITYFAIPHLRKSKGKIVVISSATAIIPLQAASVYSASKAALVKFFETLRVEISPDIKITIALPGFISTDMTTPQFKEMYGSDFILSESVSRCAKAIFRGIGRGEAYVIEPSWIKWIFLIKNVCPEIVDYLLDYIFVSYLKPYFKRD.

The chain crosses the membrane as a helical; Signal-anchor for type II membrane protein span at residues 10-30 (FLLPPLTISFLVLFYPFYLFT). Residues 53 to 79 (GASS…VARR) and aspartate 104 each bind NADP(+). Substrate is bound at residue serine 183. Tyrosine 196 acts as the Proton acceptor in catalysis. Residues 196–200 (YSASK) and lysine 200 each bind NADP(+).

The protein belongs to the short-chain dehydrogenases/reductases (SDR) family.

It localises to the membrane. The polypeptide is 11-beta-hydroxysteroid dehydrogenase-like 2 (HSD2) (Arabidopsis thaliana (Mouse-ear cress)).